The following is a 351-amino-acid chain: D-alanine--D-alanine ligase (351 aa).

Residues 141–349 (KAAFSAAGLP…ISQLVARLIE (209 aa)) form the ATP-grasp domain. An ATP-binding site is contributed by 176–231 (ETQLGYPCFIKPANLGSSVGISKAYDKKELLNGLDLAAQLDSRIVVEKNIKARELE). Asp-302, Glu-316, and Asn-318 together coordinate Mg(2+).

The protein belongs to the D-alanine--D-alanine ligase family. Requires Mg(2+) as cofactor. The cofactor is Mn(2+).

Its subcellular location is the cytoplasm. The catalysed reaction is 2 D-alanine + ATP = D-alanyl-D-alanine + ADP + phosphate + H(+). It functions in the pathway cell wall biogenesis; peptidoglycan biosynthesis. Functionally, cell wall formation. The sequence is that of D-alanine--D-alanine ligase from Prochlorococcus marinus (strain SARG / CCMP1375 / SS120).